The primary structure comprises 872 residues: Alanine--tRNA ligase (872 aa).

4 residues coordinate Zn(2+): histidine 567, histidine 571, cysteine 669, and histidine 673.

This sequence belongs to the class-II aminoacyl-tRNA synthetase family. Zn(2+) is required as a cofactor.

The protein resides in the cytoplasm. The enzyme catalyses tRNA(Ala) + L-alanine + ATP = L-alanyl-tRNA(Ala) + AMP + diphosphate. In terms of biological role, catalyzes the attachment of alanine to tRNA(Ala) in a two-step reaction: alanine is first activated by ATP to form Ala-AMP and then transferred to the acceptor end of tRNA(Ala). Also edits incorrectly charged Ser-tRNA(Ala) and Gly-tRNA(Ala) via its editing domain. This Streptococcus pyogenes serotype M28 (strain MGAS6180) protein is Alanine--tRNA ligase.